The following is a 192-amino-acid chain: Peptidyl-tRNA hydrolase (192 aa).

Tyr-17 is a tRNA binding site. Catalysis depends on His-22, which acts as the Proton acceptor. TRNA-binding residues include Phe-68, Asn-70, and Asn-116.

This sequence belongs to the PTH family. As to quaternary structure, monomer.

It is found in the cytoplasm. It catalyses the reaction an N-acyl-L-alpha-aminoacyl-tRNA + H2O = an N-acyl-L-amino acid + a tRNA + H(+). Hydrolyzes ribosome-free peptidyl-tRNAs (with 1 or more amino acids incorporated), which drop off the ribosome during protein synthesis, or as a result of ribosome stalling. Its function is as follows. Catalyzes the release of premature peptidyl moieties from peptidyl-tRNA molecules trapped in stalled 50S ribosomal subunits, and thus maintains levels of free tRNAs and 50S ribosomes. This is Peptidyl-tRNA hydrolase from Xylella fastidiosa (strain M12).